A 417-amino-acid chain; its full sequence is NADH-quinone oxidoreductase subunit D (417 aa).

It belongs to the complex I 49 kDa subunit family. As to quaternary structure, NDH-1 is composed of 14 different subunits. Subunits NuoB, C, D, E, F, and G constitute the peripheral sector of the complex.

It localises to the cell inner membrane. The enzyme catalyses a quinone + NADH + 5 H(+)(in) = a quinol + NAD(+) + 4 H(+)(out). Functionally, NDH-1 shuttles electrons from NADH, via FMN and iron-sulfur (Fe-S) centers, to quinones in the respiratory chain. The immediate electron acceptor for the enzyme in this species is believed to be ubiquinone. Couples the redox reaction to proton translocation (for every two electrons transferred, four hydrogen ions are translocated across the cytoplasmic membrane), and thus conserves the redox energy in a proton gradient. In Burkholderia cenocepacia (strain HI2424), this protein is NADH-quinone oxidoreductase subunit D.